Reading from the N-terminus, the 125-residue chain is Large ribosomal subunit protein bL12 (125 aa).

Belongs to the bacterial ribosomal protein bL12 family. In terms of assembly, homodimer. Part of the ribosomal stalk of the 50S ribosomal subunit. Forms a multimeric L10(L12)X complex, where L10 forms an elongated spine to which 2 to 4 L12 dimers bind in a sequential fashion. Binds GTP-bound translation factors.

Functionally, forms part of the ribosomal stalk which helps the ribosome interact with GTP-bound translation factors. Is thus essential for accurate translation. In Helicobacter pylori (strain ATCC 700392 / 26695) (Campylobacter pylori), this protein is Large ribosomal subunit protein bL12.